The chain runs to 335 residues: Ornithine carbamoyltransferase 2, catabolic (335 aa).

Carbamoyl phosphate-binding positions include 62-65 (STRT), glutamine 89, arginine 113, and 140-143 (HPTQ). L-ornithine is bound by residues asparagine 172, aspartate 236, and 240–241 (SM). Carbamoyl phosphate contacts are provided by residues 277-278 (CL) and arginine 322.

The protein belongs to the aspartate/ornithine carbamoyltransferase superfamily. OTCase family.

Its subcellular location is the cytoplasm. It catalyses the reaction carbamoyl phosphate + L-ornithine = L-citrulline + phosphate + H(+). Its pathway is amino-acid degradation; L-arginine degradation via ADI pathway; carbamoyl phosphate from L-arginine: step 2/2. In terms of biological role, reversibly catalyzes the transfer of the carbamoyl group from carbamoyl phosphate (CP) to the N(epsilon) atom of ornithine (ORN) to produce L-citrulline. This Staphylococcus epidermidis (strain ATCC 12228 / FDA PCI 1200) protein is Ornithine carbamoyltransferase 2, catabolic (arcB2).